Here is a 137-residue protein sequence, read N- to C-terminus: Small ribosomal subunit protein bS18c (137 aa).

This sequence belongs to the bacterial ribosomal protein bS18 family. Part of the 30S ribosomal subunit.

Its subcellular location is the plastid. The protein resides in the chloroplast. The chain is Small ribosomal subunit protein bS18c (rps18) from Chlamydomonas reinhardtii (Chlamydomonas smithii).